The sequence spans 99 residues: Nucleoid-associated protein EbfC (99 aa).

Belongs to the YbaB/EbfC family. As to quaternary structure, homodimer.

The protein localises to the cytoplasm. The protein resides in the nucleoid. Binds to DNA and alters its conformation. May be involved in regulation of gene expression, nucleoid organization and DNA protection. In Borrelia hermsii (strain HS1 / DAH), this protein is Nucleoid-associated protein EbfC.